The sequence spans 274 residues: tRNA-cytidine(32) 2-sulfurtransferase (274 aa).

The PP-loop motif signature appears at 40-45 (SGGKDS). Residues C115, C118, and C206 each coordinate [4Fe-4S] cluster.

Belongs to the TtcA family. As to quaternary structure, homodimer. Mg(2+) is required as a cofactor. It depends on [4Fe-4S] cluster as a cofactor.

It localises to the cytoplasm. The enzyme catalyses cytidine(32) in tRNA + S-sulfanyl-L-cysteinyl-[cysteine desulfurase] + AH2 + ATP = 2-thiocytidine(32) in tRNA + L-cysteinyl-[cysteine desulfurase] + A + AMP + diphosphate + H(+). Its pathway is tRNA modification. Its function is as follows. Catalyzes the ATP-dependent 2-thiolation of cytidine in position 32 of tRNA, to form 2-thiocytidine (s(2)C32). The sulfur atoms are provided by the cysteine/cysteine desulfurase (IscS) system. In Pseudomonas putida (strain W619), this protein is tRNA-cytidine(32) 2-sulfurtransferase.